A 453-amino-acid polypeptide reads, in one-letter code: Dibenzothiophene-sulfone monooxygenase (453 aa).

Residues Asp59, Thr106, His156, Tyr160, and Ser231 each contribute to the FMN site.

It belongs to the NtaA/SnaA/DszA monooxygenase family. Homodimer.

Its subcellular location is the cytoplasm. It catalyses the reaction dibenzothiophene 5,5-dioxide + FMNH2 + NADH + O2 = 2'-hydroxybiphenyl-2-sulfinate + FMN + NAD(+) + H2O + H(+). Its pathway is sulfur metabolism; dibenzothiophene degradation. Catalyzes the second step of the '4S' desulfurization pathway that removes covalently bound sulfur from dibenzothiophene (DBT) without breaking carbon-carbon bonds. Metabolizes DBT-sulfone (DBTO2 or DBT 5,5-dioxide) to 2-(2'-hydroxyphenyl)benzene sulphinate (HBPS). The chain is Dibenzothiophene-sulfone monooxygenase from Rhodococcus erythropolis (Arthrobacter picolinophilus).